The following is a 477-amino-acid chain: Bifunctional protein HldE (477 aa).

Positions 1–318 are ribokinase; that stretch reads MKVNLPAFER…ENAVRGRADT (318 aa). Residue 195 to 198 coordinates ATP; sequence NLSE. Asp-264 is a catalytic residue. Positions 344-477 are cytidylyltransferase; the sequence is MTNGVFDILH…IKKIQTESEK (134 aa).

This sequence in the N-terminal section; belongs to the carbohydrate kinase PfkB family. It in the C-terminal section; belongs to the cytidylyltransferase family. In terms of assembly, homodimer.

The catalysed reaction is D-glycero-beta-D-manno-heptose 7-phosphate + ATP = D-glycero-beta-D-manno-heptose 1,7-bisphosphate + ADP + H(+). It carries out the reaction D-glycero-beta-D-manno-heptose 1-phosphate + ATP + H(+) = ADP-D-glycero-beta-D-manno-heptose + diphosphate. Its pathway is nucleotide-sugar biosynthesis; ADP-L-glycero-beta-D-manno-heptose biosynthesis; ADP-L-glycero-beta-D-manno-heptose from D-glycero-beta-D-manno-heptose 7-phosphate: step 1/4. It functions in the pathway nucleotide-sugar biosynthesis; ADP-L-glycero-beta-D-manno-heptose biosynthesis; ADP-L-glycero-beta-D-manno-heptose from D-glycero-beta-D-manno-heptose 7-phosphate: step 3/4. Its function is as follows. Catalyzes the phosphorylation of D-glycero-D-manno-heptose 7-phosphate at the C-1 position to selectively form D-glycero-beta-D-manno-heptose-1,7-bisphosphate. Functionally, catalyzes the ADP transfer from ATP to D-glycero-beta-D-manno-heptose 1-phosphate, yielding ADP-D-glycero-beta-D-manno-heptose. The chain is Bifunctional protein HldE from Salmonella agona (strain SL483).